We begin with the raw amino-acid sequence, 333 residues long: tRNA U34 carboxymethyltransferase (333 aa).

Residues lysine 97, tryptophan 111, lysine 116, glycine 136, 158 to 160 (DPS), 189 to 190 (IE), methionine 205, tyrosine 209, and arginine 324 contribute to the carboxy-S-adenosyl-L-methionine site.

It belongs to the class I-like SAM-binding methyltransferase superfamily. CmoB family. In terms of assembly, homotetramer.

The catalysed reaction is carboxy-S-adenosyl-L-methionine + 5-hydroxyuridine(34) in tRNA = 5-carboxymethoxyuridine(34) in tRNA + S-adenosyl-L-homocysteine + H(+). Catalyzes carboxymethyl transfer from carboxy-S-adenosyl-L-methionine (Cx-SAM) to 5-hydroxyuridine (ho5U) to form 5-carboxymethoxyuridine (cmo5U) at position 34 in tRNAs. This is tRNA U34 carboxymethyltransferase from Chromohalobacter salexigens (strain ATCC BAA-138 / DSM 3043 / CIP 106854 / NCIMB 13768 / 1H11).